A 176-amino-acid chain; its full sequence is MDLPGPIHEILVLFLGFVLLLGGLGVVLLTNPIYSAFSLGLVLVCISLFYFLLNSYFVAVAQLLIYVGAINVLIIFAVMFVNGSEWSKDKNSWTIGDGFTSLVCITIVFSLMTTIPDTSWYGILWTTRSNQIVEQGLINNVQQIGIHLATDFYLPFELISIILLVSLIGAITMARQ.

5 helical membrane passes run 10 to 30 (ILVL…VLLT), 33 to 53 (IYSA…YFLL), 60 to 80 (VAQL…AVMF), 95 to 115 (IGDG…MTTI), and 152 to 172 (FYLP…GAIT).

This sequence belongs to the complex I subunit 6 family. As to quaternary structure, NDH is composed of at least 16 different subunits, 5 of which are encoded in the nucleus.

The protein resides in the plastid. Its subcellular location is the chloroplast thylakoid membrane. The catalysed reaction is a plastoquinone + NADH + (n+1) H(+)(in) = a plastoquinol + NAD(+) + n H(+)(out). The enzyme catalyses a plastoquinone + NADPH + (n+1) H(+)(in) = a plastoquinol + NADP(+) + n H(+)(out). Functionally, NDH shuttles electrons from NAD(P)H:plastoquinone, via FMN and iron-sulfur (Fe-S) centers, to quinones in the photosynthetic chain and possibly in a chloroplast respiratory chain. The immediate electron acceptor for the enzyme in this species is believed to be plastoquinone. Couples the redox reaction to proton translocation, and thus conserves the redox energy in a proton gradient. This chain is NAD(P)H-quinone oxidoreductase subunit 6, chloroplastic (ndhG), found in Brachypodium distachyon (Purple false brome).